The sequence spans 52 residues: Large ribosomal subunit protein bL32c (52 aa).

It belongs to the bacterial ribosomal protein bL32 family.

The protein resides in the plastid. Its subcellular location is the chloroplast. This chain is Large ribosomal subunit protein bL32c, found in Aethionema grandiflorum (Persian stone-cress).